A 295-amino-acid chain; its full sequence is MFKLLSFANAPAIVRANQKDSYFESRLHNQLLDVVKAIKGSHFVHKYPEELRTLATALYLCLTTLVGSKTLGEEYVDLVYVSRDGRKIPKFASRFGFVVAYVLFPYAVRQLLQKLKAQQSRLAQLVSGVSYMNVMDLLNLHLALFYFTGKYYQFAKRLFGLRYAFGYRVDKNQQRARGNYELLGLLIIFQTVFKNVANLRKLWGATKTVQDSGDLIYRFRDQTSDVIDLADPKVLPYLPEASRTCMLCLSPMKDPSCGECGHVFCWKCVLDWVKERQECPLCRAKMRESQLLPLR.

At 1–9 the chain is on the peroxisomal matrix side; it reads MFKLLSFAN. Residues 10–39 form a helical membrane-spanning segment; that stretch reads APAIVRANQKDSYFESRLHNQLLDVVKAIK. Residue Gly-40 is a topological domain, cytoplasmic. The helical transmembrane segment at 41–62 threads the bilayer; the sequence is SHFVHKYPEELRTLATALYLCL. Residues 63–108 lie on the Peroxisomal matrix side of the membrane; that stretch reads TTLVGSKTLGEEYVDLVYVSRDGRKIPKFASRFGFVVAYVLFPYAV. The chain crosses the membrane as a helical span at residues 109–120; the sequence is RQLLQKLKAQQS. The Cytoplasmic segment spans residues 121–122; it reads RL. Residues 123–148 traverse the membrane as a helical segment; sequence AQLVSGVSYMNVMDLLNLHLALFYFT. The Peroxisomal matrix portion of the chain corresponds to 149-179; it reads GKYYQFAKRLFGLRYAFGYRVDKNQQRARGN. The helical transmembrane segment at 180-199 threads the bilayer; that stretch reads YELLGLLIIFQTVFKNVANL. Residues 200 to 295 are Cytoplasmic-facing; it reads RKLWGATKTV…MRESQLLPLR (96 aa). Zn(2+) contacts are provided by Cys-245, Cys-248, Cys-260, His-262, Cys-265, Cys-268, Cys-279, and Cys-282. An RING-type zinc finger spans residues 245–283; it reads CMLCLSPMKDPSCGECGHVFCWKCVLDWVKERQECPLCR.

Belongs to the pex2/pex10/pex12 family. Component of the PEX2-PEX10-PEX12 retrotranslocation channel, composed of PEX2, PEX10 and PEX12.

It localises to the peroxisome membrane. It catalyses the reaction S-ubiquitinyl-[E2 ubiquitin-conjugating enzyme]-L-cysteine + [acceptor protein]-L-lysine = [E2 ubiquitin-conjugating enzyme]-L-cysteine + N(6)-ubiquitinyl-[acceptor protein]-L-lysine.. It participates in protein modification; protein ubiquitination. The E3 ubiquitin-protein ligase activity is stimulated by PEX12. Functionally, E3 ubiquitin-protein ligase component of a retrotranslocation channel required for peroxisome organization by mediating export of the PEX5 receptor from peroxisomes to the cytosol, thereby promoting PEX5 recycling. The retrotranslocation channel is composed of PEX2, PEX10 and PEX12; each subunit contributing transmembrane segments that coassemble into an open channel that specifically allows the passage of PEX5 through the peroxisomal membrane. PEX10 also regulates PEX5 recycling by acting as a E3 ubiquitin-protein ligase. When PEX5 recycling is compromised, PEX10 catalyzes polyubiquitination of PEX5 during its passage through the retrotranslocation channel, leading to its degradation. This Pichia angusta (Yeast) protein is Peroxisome biogenesis factor 10 (PEX10).